We begin with the raw amino-acid sequence, 500 residues long: Intracellular exo-alpha-(1-&gt;5)-L-arabinofuranosidase (500 aa).

Residues Glu28, Asn73, and Asn173 each contribute to the alpha-L-arabinofuranose site. Glu174 functions as the Proton donor/acceptor in the catalytic mechanism. 3 residues coordinate alpha-L-arabinofuranose: Tyr245, Glu293, and Gln350. Catalysis depends on Glu293, which acts as the Nucleophile.

The protein belongs to the glycosyl hydrolase 51 family. Homohexamer; trimer of dimers.

The protein resides in the cytoplasm. The catalysed reaction is Hydrolysis of terminal non-reducing alpha-L-arabinofuranoside residues in alpha-L-arabinosides.. The protein operates within glycan metabolism; L-arabinan degradation. In terms of biological role, involved in the degradation of arabinan and is a key enzyme in the complete degradation of the plant cell wall. Catalyzes the cleavage of terminal alpha-(1-&gt;5)-arabinofuranosyl bonds in different hemicellulosic homopolysaccharides (branched and debranched arabinans). The sequence is that of Intracellular exo-alpha-(1-&gt;5)-L-arabinofuranosidase (abfA) from Halalkalibacterium halodurans (strain ATCC BAA-125 / DSM 18197 / FERM 7344 / JCM 9153 / C-125) (Bacillus halodurans).